The following is a 394-amino-acid chain: Ceramide glucosyltransferase (394 aa).

Over 1–10 (MALLDLALEG) the chain is Lumenal. A helical transmembrane segment spans residues 11–32 (MAVFGFVLFLVLWLMHFMAIIY). Topologically, residues 33–195 (TRLHLNKKAT…QVYFGTSHPR (163 aa)) are cytoplasmic. Residue Asp-92 is a short sequence motif, D1. An N6-acetyllysine modification is found at Lys-117. A short sequence motif (D2) is located at residue Asp-144. A helical membrane pass occupies residues 196-215 (YYISANVTGFKCVTGMSCLM). At 216 to 287 (RKDVLDQAGG…KLRINMLPAT (72 aa)) the chain is on the lumenal side. Asp-236 is a short sequence motif (D3). Asp-236 functions as the Proton acceptor in the catalytic mechanism. The (Q/R)XXRW motif lies at 272–276 (RMIRW). The chain crosses the membrane as a helical span at residues 288–304 (IICEPISECFVASLIIG). At 305–309 (WAAHH) the chain is on the cytoplasmic side. Residues 310 to 328 (VFRWDIMVFFMCHCLAWFI) form a helical membrane-spanning segment. The Lumenal portion of the chain corresponds to 329–348 (FDYIQLRGVQGGTLCFSKLD). Residues 349–369 (YAVAWFIRESMTIYIFLSALW) form a helical membrane-spanning segment. Over 370–394 (DPTISWRTGRYRLRCGGTAEEILDV) the chain is Cytoplasmic.

This sequence belongs to the glycosyltransferase 2 family. In terms of assembly, interacts with RTN1; regulates the ceramide glucosyltransferase activity of UGCG. Found in all tissues examined.

The protein resides in the golgi apparatus membrane. It catalyses the reaction an N-acylsphing-4-enine + UDP-alpha-D-glucose = a beta-D-glucosyl-(1&lt;-&gt;1')-N-acylsphing-4-enine + UDP + H(+). The enzyme catalyses UDP-alpha-D-xylose + an N-acylsphing-4-enine = a beta-D-xylosyl-(1&lt;-&gt;1')-N-acylsphing-4-enine + UDP + H(+). It carries out the reaction N-(9Z-octadecenoyl)-sphing-4-enine + UDP-alpha-D-xylose = beta-D-xylosyl-(1&lt;-&gt;1')-N-(9Z-octadecenoyl)-sphing-4-enine + UDP + H(+). It functions in the pathway lipid metabolism; sphingolipid metabolism. Functionally, participates in the initial step of the glucosylceramide-based glycosphingolipid/GSL synthetic pathway at the cytosolic surface of the Golgi. Catalyzes the transfer of glucose from UDP-glucose to ceramide to produce glucosylceramide/GlcCer (such as beta-D-glucosyl-(1&lt;-&gt;1')-N-acylsphing-4-enine). GlcCer is the core component of glycosphingolipids/GSLs, amphipathic molecules consisting of a ceramide lipid moiety embedded in the outer leaflet of the membrane, linked to one of hundreds of different externally oriented oligosaccharide structures. Glycosphingolipids are essential components of membrane microdomains that mediate membrane trafficking and signal transduction, implicated in many fundamental cellular processes, including growth, differentiation, migration, morphogenesis, cell-to-cell and cell-to-matrix interactions. They are required for instance in the proper development and functioning of the nervous system. As an example of their role in signal transduction, they regulate the leptin receptor/LEPR in the leptin-mediated signaling pathway. They also play an important role in the establishment of the skin barrier regulating keratinocyte differentiation and the proper assembly of the cornified envelope. The biosynthesis of GSLs is also required for the proper intestinal endocytic uptake of nutritional lipids. Catalyzes the synthesis of xylosylceramide/XylCer (such as beta-D-xylosyl-(1&lt;-&gt;1')-N-acylsphing-4-enine) using UDP-Xyl as xylose donor. This is Ceramide glucosyltransferase from Homo sapiens (Human).